A 50-amino-acid polypeptide reads, in one-letter code: Acidic phospholipase A2 1 (50 aa).

Ca(2+) is bound by residues Y27, G29, and G31. An intrachain disulfide couples C28 to C44. Residue H47 is part of the active site. Ca(2+) is bound at residue D48.

Belongs to the phospholipase A2 family. Group II subfamily. D49 sub-subfamily. In terms of assembly, monomer. Ca(2+) serves as cofactor. Expressed by the venom gland.

It localises to the secreted. The catalysed reaction is a 1,2-diacyl-sn-glycero-3-phosphocholine + H2O = a 1-acyl-sn-glycero-3-phosphocholine + a fatty acid + H(+). In terms of biological role, snake venom phospholipase A2 (PLA2) that displays a potent enzymatic activity as measured by indirect hemolysis of red blood cells. Is neither lethal when injected into mice nor does it present anticoagulant activity. Displays a moderate inhibitory activity on the aggregation of platelets induced by low levels of ADP, thrombin and arachidonate. In contrast, strongly inhibits platelet aggregation induced by high doses of collagen. Shows myotoxic activity, increases the plasma creatine-kinase activity and induces edema and myonecrosis of mouse skeletal muscles. PLA2 catalyzes the calcium-dependent hydrolysis of the 2-acyl groups in 3-sn-phosphoglycerides. This Lachesis muta muta (Bushmaster) protein is Acidic phospholipase A2 1.